A 310-amino-acid chain; its full sequence is N-acetylmuramic acid 6-phosphate etherase (310 aa).

In terms of domain architecture, SIS spans 64–227 (ITSRLKSNGR…STSVMIKLGK (164 aa)). Glutamate 92 functions as the Proton donor in the catalytic mechanism. Residue glutamate 123 is part of the active site.

This sequence belongs to the GCKR-like family. MurNAc-6-P etherase subfamily. In terms of assembly, homodimer.

The catalysed reaction is N-acetyl-D-muramate 6-phosphate + H2O = N-acetyl-D-glucosamine 6-phosphate + (R)-lactate. Its pathway is amino-sugar metabolism; N-acetylmuramate degradation. In terms of biological role, specifically catalyzes the cleavage of the D-lactyl ether substituent of MurNAc 6-phosphate, producing GlcNAc 6-phosphate and D-lactate. This Prochlorococcus marinus (strain NATL2A) protein is N-acetylmuramic acid 6-phosphate etherase.